Consider the following 203-residue polypeptide: Ribosomal RNA small subunit methyltransferase G (203 aa).

Residues glycine 73, leucine 78, valine 124 to glutamate 125, and arginine 138 each bind S-adenosyl-L-methionine.

Belongs to the methyltransferase superfamily. RNA methyltransferase RsmG family.

The protein localises to the cytoplasm. It catalyses the reaction guanosine(527) in 16S rRNA + S-adenosyl-L-methionine = N(7)-methylguanosine(527) in 16S rRNA + S-adenosyl-L-homocysteine. In terms of biological role, specifically methylates the N7 position of guanine in position 527 of 16S rRNA. This Glaesserella parasuis serovar 5 (strain SH0165) (Haemophilus parasuis) protein is Ribosomal RNA small subunit methyltransferase G.